The primary structure comprises 196 residues: Zinc metalloproteinase-disintegrin-like bothrojarin-3 (196 aa).

The Disintegrin domain maps to 2–88; that stretch reads PPVCGTELLE…DCPTDDIQRN (87 aa). 5 residues coordinate Ca(2+): Val-4, Leu-9, Glu-11, Glu-14, and Asp-17. Intrachain disulfides connect Cys-5/Cys-34, Cys-16/Cys-29, Cys-18/Cys-24, Cys-28/Cys-51, Cys-42/Cys-48, Cys-47/Cys-73, Cys-60/Cys-80, Cys-67/Cys-99, Cys-92/Cys-104, Cys-111/Cys-161, Cys-126/Cys-168, Cys-139/Cys-149, and Cys-156/Cys-193. The short motif at 66–68 is the D/ECD-tripeptide element; sequence ECD.

This sequence belongs to the venom metalloproteinase (M12B) family. P-III subfamily. P-IIIa sub-subfamily. Monomer. Zn(2+) is required as a cofactor. Post-translationally, glycosylated. Expressed by the venom gland.

The protein resides in the secreted. The hemorrhagic metalloproteinase-disintegrin-like bothrojarin-1 is a potent inhibitor of collagen-induced platelet aggregation by blockage of alpha-2/beta-1 (ITGA2/ITGB1) integrin. It does not present any fibrinogen-clotting activity. The sequence is that of Zinc metalloproteinase-disintegrin-like bothrojarin-3 from Bothrops jararaca (Jararaca).